Reading from the N-terminus, the 562-residue chain is Arginine--tRNA ligase 1 (562 aa).

The 'HIGH' region signature appears at 122 to 132 (PNIAKPFSMGH).

It belongs to the class-I aminoacyl-tRNA synthetase family. In terms of assembly, monomer.

It is found in the cytoplasm. The catalysed reaction is tRNA(Arg) + L-arginine + ATP = L-arginyl-tRNA(Arg) + AMP + diphosphate. The protein is Arginine--tRNA ligase 1 of Bacillus thuringiensis subsp. konkukian (strain 97-27).